The primary structure comprises 193 residues: Putative manganese efflux pump MntP (193 aa).

6 helical membrane passes run 6–26, 48–68, 71–91, 108–128, 132–152, and 165–185; these read VIFI…GIAC, AGMV…ISAF, WIAF…ALQG, LLGV…AFAV, NIGL…FLGF, and WVGV…LAEH.

The protein belongs to the MntP (TC 9.B.29) family.

The protein resides in the cell membrane. Its function is as follows. Probably functions as a manganese efflux pump. This is Putative manganese efflux pump MntP from Dehalococcoides mccartyi (strain ATCC BAA-2100 / JCM 16839 / KCTC 5957 / BAV1).